The chain runs to 266 residues: Mitochondrial S-adenosylmethionine carrier protein (266 aa).

Solcar repeat units follow at residues 4 to 77, 85 to 167, and 176 to 264; these read RELC…AKRF, LSPI…LKNL, and VDCW…VRSS. 6 helical membrane-spanning segments follow: residues 5-25, 49-69, 84-104, 141-161, 181-201, and 237-257; these read ELCA…LILF, IYAG…AFFV, YLSP…ACLI, RGYK…FPLW, SAVC…PLDV, and FAGV…FLGA.

This sequence belongs to the mitochondrial carrier (TC 2.A.29) family.

It localises to the mitochondrion inner membrane. The catalysed reaction is S-adenosyl-L-homocysteine(out) + S-adenosyl-L-methionine(in) = S-adenosyl-L-homocysteine(in) + S-adenosyl-L-methionine(out). Functionally, mitochondrial S-adenosyl-L-methionine/S-adenosyl-L-homocysteine antiporter. Mediates the exchange of cytosolic S-adenosyl-L-methionine, the predominant methyl-group donor for macromolecule methylation processes, for mitochondrial S-adenosylhomocysteine(SAH), a by-product of methylation reactions. In Xenopus laevis (African clawed frog), this protein is Mitochondrial S-adenosylmethionine carrier protein (slc25a26).